The chain runs to 549 residues: Cation/acetate symporter ActP (549 aa).

Transmembrane regions (helical) follow at residues 33-53, 77-97, 103-123, 148-168, 183-203, 206-226, 262-282, 303-323, 355-375, 404-424, 428-448, 464-484, and 493-513; these read WQAI…TYWA, LAIA…ALVF, GLIY…LIAE, ILSA…QMVG, IAVV…GMLA, WVQI…AFMV, ISAL…PHIL, GFMG…IMLV, LFLG…VAGL, VSKI…VLFE, IAFM…PIIL, GGWL…TIWV, and IFPY…GIWF.

It belongs to the sodium:solute symporter (SSF) (TC 2.A.21) family.

The protein localises to the cell inner membrane. Transports acetate. This is Cation/acetate symporter ActP from Citrobacter koseri (strain ATCC BAA-895 / CDC 4225-83 / SGSC4696).